A 410-amino-acid polypeptide reads, in one-letter code: Cytochrome P450 (410 aa).

C359 is a binding site for heme.

Belongs to the cytochrome P450 family. It depends on heme as a cofactor.

This chain is Cytochrome P450 (cypA), found in Bacillus subtilis (strain 168).